Here is a 339-residue protein sequence, read N- to C-terminus: Endospore coat-associated protein YutH (339 aa).

The protein belongs to the CotS family.

It localises to the forespore outer membrane. It is found in the spore coat. Involved in sporulation. The polypeptide is Endospore coat-associated protein YutH (yutH) (Bacillus subtilis (strain 168)).